Reading from the N-terminus, the 24-residue chain is Protein YahV (24 aa).

A helical membrane pass occupies residues 4-24 (ILLNVLNIVFIGIAIILVIIC).

It localises to the cell inner membrane. This Escherichia coli (strain K12) protein is Protein YahV.